Here is a 394-residue protein sequence, read N- to C-terminus: NAD(P)H-quinone oxidoreductase subunit H (394 aa).

It belongs to the complex I 49 kDa subunit family. In terms of assembly, NDH-1 can be composed of about 15 different subunits; different subcomplexes with different compositions have been identified which probably have different functions.

It localises to the cellular thylakoid membrane. The catalysed reaction is a plastoquinone + NADH + (n+1) H(+)(in) = a plastoquinol + NAD(+) + n H(+)(out). It carries out the reaction a plastoquinone + NADPH + (n+1) H(+)(in) = a plastoquinol + NADP(+) + n H(+)(out). NDH-1 shuttles electrons from an unknown electron donor, via FMN and iron-sulfur (Fe-S) centers, to quinones in the respiratory and/or the photosynthetic chain. The immediate electron acceptor for the enzyme in this species is believed to be plastoquinone. Couples the redox reaction to proton translocation, and thus conserves the redox energy in a proton gradient. Cyanobacterial NDH-1 also plays a role in inorganic carbon-concentration. The polypeptide is NAD(P)H-quinone oxidoreductase subunit H (Nostoc sp. (strain PCC 7120 / SAG 25.82 / UTEX 2576)).